The following is a 418-amino-acid chain: Hepatic and glial cell adhesion molecule (418 aa).

The N-terminal stretch at 1 to 33 (MKREREAPSRAFSALRLAPFVYLLLIQTEPLEG) is a signal peptide. Residues 34–141 (VNITSPVRLI…TGEKTINLTV (108 aa)) form the Ig-like V-type domain. Topologically, residues 34–240 (VNITSPVRLI…VKITVYRRSS (207 aa)) are extracellular. Residues asparagine 35, asparagine 138, asparagine 167, and asparagine 189 are each glycosylated (N-linked (GlcNAc...) asparagine). One can recognise an Ig-like C2-type domain in the interval 148-234 (PQVLVASTTV…QGRSPPVKIT (87 aa)). The cysteines at positions 168 and 217 are disulfide-linked. Residues 241-261 (LYIILSTGGIFLLVTLVTVCA) traverse the membrane as a helical segment. The Cytoplasmic segment spans residues 262–418 (CWKPSKKSGK…DEAGPVEISA (157 aa)). Residues 271-418 (KKRKLEKQNS…DEAGPVEISA (148 aa)) are disordered. Serine 280 carries the phosphoserine modification. A compositionally biased stretch (basic and acidic residues) spans 287–308 (SDDRLKPEADTLPRSGEQERKN). Phosphoserine is present on residues serine 352 and serine 379. Positions 385-400 (GSPGRSRSASRTLRTA) are enriched in low complexity.

As to quaternary structure, homodimer. Dimer formation occurs predominantly through cis interactions on the cell surface. Part of a complex containing MLC1, TRPV4, AQP4 and ATP1B1. Interacts with CLCN2. N-glycosylated.

The protein localises to the cytoplasm. Its subcellular location is the cell membrane. In terms of biological role, involved in regulating cell motility and cell-matrix interactions. May inhibit cell growth through suppression of cell proliferation. In glia, associates and targets CLCN2 at astrocytic processes and myelinated fiber tracts where it may regulate transcellular chloride flux involved in neuron excitability. This chain is Hepatic and glial cell adhesion molecule, found in Bos taurus (Bovine).